Here is a 663-residue protein sequence, read N- to C-terminus: UvrABC system protein B (663 aa).

A Helicase ATP-binding domain is found at 30–414 (EGIKAGKRHQ…IEHTDKMVEQ (385 aa)). 43 to 50 (GATGTGKT) contributes to the ATP binding site. The short motif at 96 to 119 (YYDYYQPEAYVPSTDTFIEKDASI) is the Beta-hairpin element. The Helicase C-terminal domain maps to 434 to 600 (QIDDLLSEIQ…TINKKIHDLI (167 aa)). In terms of domain architecture, UVR spans 627 to 662 (QKTIDNIEKEMKQAAKDLDFEKATELRDMLFELKAE).

The protein belongs to the UvrB family. In terms of assembly, forms a heterotetramer with UvrA during the search for lesions. Interacts with UvrC in an incision complex.

Its subcellular location is the cytoplasm. Its function is as follows. The UvrABC repair system catalyzes the recognition and processing of DNA lesions. A damage recognition complex composed of 2 UvrA and 2 UvrB subunits scans DNA for abnormalities. Upon binding of the UvrA(2)B(2) complex to a putative damaged site, the DNA wraps around one UvrB monomer. DNA wrap is dependent on ATP binding by UvrB and probably causes local melting of the DNA helix, facilitating insertion of UvrB beta-hairpin between the DNA strands. Then UvrB probes one DNA strand for the presence of a lesion. If a lesion is found the UvrA subunits dissociate and the UvrB-DNA preincision complex is formed. This complex is subsequently bound by UvrC and the second UvrB is released. If no lesion is found, the DNA wraps around the other UvrB subunit that will check the other stand for damage. The sequence is that of UvrABC system protein B from Staphylococcus aureus (strain MSSA476).